Reading from the N-terminus, the 347-residue chain is Rhodopsin (347 aa).

Residues 1-33 (TEGPDFYIPMVNTTGVVRSPYEYPQYYLVNPAA) are Extracellular-facing. An N-linked (GlcNAc...) asparagine glycan is attached at asparagine 12. A helical transmembrane segment spans residues 34–58 (YAVLGAYMFFLIIVGFPINFLTLYV). Residues 59-70 (TLEHKKLRTPLN) are Cytoplasmic-facing. Residues 71 to 93 (YILLNLAVADLFMVIGGFTTTMY) traverse the membrane as a helical segment. The Extracellular portion of the chain corresponds to 94–107 (SSMHGYFVLGRLGC). Cysteine 107 and cysteine 184 are disulfide-bonded. The helical transmembrane segment at 108–130 (NIEGFFATLGGMISLWSLAVLAI) threads the bilayer. The 'Ionic lock' involved in activated form stabilization signature appears at 131-133 (ERW). Topologically, residues 131-149 (ERWVVVCKPISNFRFGENH) are cytoplasmic. Residues 150–170 (AIMGVSLTWVMALACTVPPLV) form a helical membrane-spanning segment. Residues 171-199 (GWSRYIPEGMQCACGIDYYTRAEGYNNES) lie on the Extracellular side of the membrane. An N-linked (GlcNAc...) asparagine glycan is attached at asparagine 197. Residues 200-221 (FVIYMFTFHFLFPMFIIFFCYG) traverse the membrane as a helical segment. The Cytoplasmic segment spans residues 222-249 (RLLCAVKEAAAAQQESETTQRAEREVTR). The chain crosses the membrane as a helical span at residues 250–271 (MVILMVIGYLVCWLPYASVAWF). Topologically, residues 272-283 (IFTHKGSEFGPL) are extracellular. Residues 284 to 305 (FMAVPSFFAKSSSIYNPIIYIC) traverse the membrane as a helical segment. N6-(retinylidene)lysine is present on lysine 293. Topologically, residues 306–347 (MNKQFRQCMITTLFCGKNPFEGQEEDSSTKTEASSASSVSPA) are cytoplasmic. Cysteine 320 carries the S-palmitoyl cysteine lipid modification. Residues 326–347 (EGQEEDSSTKTEASSASSVSPA) are disordered. Residues 335 to 347 (KTEASSASSVSPA) are compositionally biased toward low complexity.

The protein belongs to the G-protein coupled receptor 1 family. Opsin subfamily. Post-translationally, phosphorylated on some or all of the serine and threonine residues present in the C-terminal region. Contains one covalently linked retinal chromophore.

Its subcellular location is the membrane. The protein localises to the cell projection. The protein resides in the cilium. It localises to the photoreceptor outer segment. In terms of biological role, photoreceptor required for image-forming vision at low light intensity. While most salt water fish species use retinal as chromophore, most freshwater fish use 3-dehydroretinal, or a mixture of retinal and 3-dehydroretinal. Light-induced isomerization of 11-cis to all-trans retinal triggers a conformational change that activates signaling via G-proteins. Subsequent receptor phosphorylation mediates displacement of the bound G-protein alpha subunit by arrestin and terminates signaling. The chain is Rhodopsin (rho) from Sargocentron spiniferum (Sabre squirrelfish).